The sequence spans 315 residues: Putative peptide transport system permease protein BMEII0209 (315 aa).

Helical transmembrane passes span 13-33 (AIPV…LLPG), 102-122 (LALL…VVAA), 136-156 (LALL…VILF), 178-198 (WLRS…GYLA), 238-258 (VSVL…SVVI), and 287-307 (MLFL…LYTI). The ABC transmembrane type-1 domain occupies 96–305 (LPVTISLALL…AINVLVDILY (210 aa)).

Belongs to the binding-protein-dependent transport system permease family. In terms of assembly, the complex is composed of two ATP-binding proteins (BMEII0205 and BMEII0206), two transmembrane proteins (BMEII0207/BMEII0208 and BMEII0209) and a solute-binding protein (BMEII0210).

Its subcellular location is the cell inner membrane. Functionally, probably part of an ABC transporter complex that could be involved in peptide import. Probably responsible for the translocation of the substrate across the membrane. The polypeptide is Putative peptide transport system permease protein BMEII0209 (Brucella melitensis biotype 1 (strain ATCC 23456 / CCUG 17765 / NCTC 10094 / 16M)).